Reading from the N-terminus, the 411-residue chain is 2,3-bisphosphoglycerate-independent phosphoglycerate mutase (411 aa).

Belongs to the BPG-independent phosphoglycerate mutase family. A-PGAM subfamily.

It carries out the reaction (2R)-2-phosphoglycerate = (2R)-3-phosphoglycerate. The protein operates within carbohydrate degradation; glycolysis; pyruvate from D-glyceraldehyde 3-phosphate: step 3/5. Its function is as follows. Catalyzes the interconversion of 2-phosphoglycerate and 3-phosphoglycerate. The chain is 2,3-bisphosphoglycerate-independent phosphoglycerate mutase from Methanosphaerula palustris (strain ATCC BAA-1556 / DSM 19958 / E1-9c).